The chain runs to 642 residues: ATP-dependent rRNA helicase spb4 (642 aa).

Residues 14–42 (WDGVTPALSEWVLDAVASMGFTRMTPVQA) carry the Q motif motif. The Helicase ATP-binding domain maps to 45-250 (IPLFMAHKDV…RVGLRNPVKV (206 aa)). Residue 58–65 (AVTGSGKT) coordinates ATP. Residues 198–201 (DEAD) carry the DEAD box motif. The Helicase C-terminal domain occupies 284-438 (AIKHILYSLE…TLTITDADAA (155 aa)). Positions 522 to 625 (AYKDKQREKR…RLLRRAAKDK (104 aa)) form a coiled coil. 2 stretches are compositionally biased toward basic and acidic residues: residues 527-536 (QREKRRKEQV) and 577-628 (AKQA…KESK). Positions 527–642 (QREKRRKEQV…DDDDEFKGFD (116 aa)) are disordered. Acidic residues predominate over residues 632 to 642 (GDDDDEFKGFD).

This sequence belongs to the DEAD box helicase family. DDX55/SPB4 subfamily. Component of pre-60S ribosomal complexes.

The protein resides in the nucleus. It is found in the nucleolus. The enzyme catalyses ATP + H2O = ADP + phosphate + H(+). Its function is as follows. ATP-binding RNA helicase involved in the biogenesis of 60S ribosomal subunits. Binds 90S pre-ribosomal particles and dissociates from pre-60S ribosomal particles after processing of 27SB pre-rRNA. Required for the normal formation of 18S rRNA through the processing of pre-rRNAs at sites A0, A1 and A2, and the normal formation of 25S and 5.8S rRNAs through the processing of pre-rRNAs at sites C1 and C2. This is ATP-dependent rRNA helicase spb4 from Aspergillus niger (strain ATCC MYA-4892 / CBS 513.88 / FGSC A1513).